The sequence spans 462 residues: Malonyl-coenzyme:anthocyanin 5-O-glucoside-6'''-O-malonyltransferase (462 aa).

Active-site proton acceptor residues include H167 and D390.

It belongs to the plant acyltransferase family. In terms of tissue distribution, detected in petals and sepals, and at lower levels in bracts and red stems.

The enzyme catalyses pelargonidin 3-O-(6-O-[(E)-caffeoyl]-beta-D-glucoside) 5-O-beta-D-glucoside + malonyl-CoA = 4'''-demalonylsalvianin + CoA. It participates in pigment biosynthesis; anthocyanin biosynthesis. Its activity is regulated as follows. Completely inhibited by 10 mM p-coumaric acid, this inhibition is rapid, reversible and non-competitive. Completely inhibited by 0.1 mM Cu(2+), 0.1 mM Hg(2+) and 10 mM caffeic acid. Partially inhibited by 5 mM N-ethylmaleimide, 1 mM diethylpyrocarbonate and 1 mM acetyl-CoA. Catalyzes the transfer of a malonyl group from malonyl-CoA to the 6'''-hydroxyl group of the 5-glucosyl moiety of anthocyanins. Active towards bisdemalonylsalvianin (pelargonidin 3-O-(6-caffeoyl-beta-D-glucoside) 5-O-beta-D-glucoside) and shisonin, but not towards nodemalonylsalvianin, salvianin, pelargonidin 3,5-diglucoside and delphinidin 3,5-diglucoside. The protein is Malonyl-coenzyme:anthocyanin 5-O-glucoside-6'''-O-malonyltransferase of Salvia splendens (Scarlet sage).